The sequence spans 1024 residues: Multidrug resistance protein MdtC (1024 aa).

The next 11 membrane-spanning stretches (helical) occupy residues 15 to 35, 333 to 353, 360 to 380, 387 to 407, 431 to 451, 463 to 483, 528 to 548, 853 to 873, 897 to 917, 953 to 973, and 984 to 1004; these read WLLT…LPVA, EVEQ…FAFL, LIPA…MYLC, LSLM…IVVL, VGFT…PLLL, FAIT…TLTP, WGLL…ISIP, LWLI…LYES, LFNA…IGIV, PIIM…LGSG, and ITIV…TPVV.

Belongs to the resistance-nodulation-cell division (RND) (TC 2.A.6) family. MdtC subfamily. Part of a tripartite efflux system composed of MdtA, MdtB and MdtC. MdtC forms a heteromultimer with MdtB.

It is found in the cell inner membrane. This is Multidrug resistance protein MdtC from Erwinia tasmaniensis (strain DSM 17950 / CFBP 7177 / CIP 109463 / NCPPB 4357 / Et1/99).